Here is a 360-residue protein sequence, read N- to C-terminus: Ribosomal RNA large subunit methyltransferase M (360 aa).

S-adenosyl-L-methionine contacts are provided by residues Ser-187, 220-223 (CPGG), Asp-239, Asp-259, and Asp-276. Lys-305 acts as the Proton acceptor in catalysis.

Belongs to the class I-like SAM-binding methyltransferase superfamily. RNA methyltransferase RlmE family. RlmM subfamily. Monomer.

The protein resides in the cytoplasm. The catalysed reaction is cytidine(2498) in 23S rRNA + S-adenosyl-L-methionine = 2'-O-methylcytidine(2498) in 23S rRNA + S-adenosyl-L-homocysteine + H(+). In terms of biological role, catalyzes the 2'-O-methylation at nucleotide C2498 in 23S rRNA. In Photobacterium profundum (strain SS9), this protein is Ribosomal RNA large subunit methyltransferase M.